A 67-amino-acid chain; its full sequence is DNA gyrase inhibitor YacG (67 aa).

4 residues coordinate Zn(2+): Cys-10, Cys-13, Cys-29, and Cys-33. A compositionally biased stretch (basic and acidic residues) spans 44 to 57; sequence EEKRIPSSGDRSDT. A disordered region spans residues 44 to 67; that stretch reads EEKRIPSSGDRSDTDGWSEEENQP.

It belongs to the DNA gyrase inhibitor YacG family. In terms of assembly, interacts with GyrB. The cofactor is Zn(2+).

Its function is as follows. Inhibits all the catalytic activities of DNA gyrase by preventing its interaction with DNA. Acts by binding directly to the C-terminal domain of GyrB, which probably disrupts DNA binding by the gyrase. This Cronobacter sakazakii (strain ATCC BAA-894) (Enterobacter sakazakii) protein is DNA gyrase inhibitor YacG.